A 166-amino-acid polypeptide reads, in one-letter code: uncharacterized protein (166 aa).

The interval 28–55 (SRQVHPPWPVPCKSKLQEQDSSESKESK) is disordered. A compositionally biased stretch (basic and acidic residues) spans 42-55 (KLQEQDSSESKESK). One can recognise an HTH araC/xylS-type domain in the interval 67 to 163 (QNAMLYIENN…NYTPKQFKRT (97 aa)). 2 DNA-binding regions (H-T-H motif) span residues 84-105 (DTVA…KLAT) and 130-153 (VTET…KKRT).

This is an uncharacterized protein from Pseudoalteromonas carrageenovora (Alteromonas carrageenovora).